A 397-amino-acid chain; its full sequence is Succinate--CoA ligase [ADP-forming] subunit beta (397 aa).

The ATP-grasp domain occupies 9 to 254 (KALLRQYGAP…ETEEDPKELA (246 aa)). Residues Lys-46, 53 to 55 (GRG), Glu-109, Ser-112, and Glu-117 contribute to the ATP site. Mg(2+)-binding residues include Asn-209 and Asp-223. Residues Asn-274 and 331 to 333 (GIM) contribute to the substrate site.

The protein belongs to the succinate/malate CoA ligase beta subunit family. As to quaternary structure, heterotetramer of two alpha and two beta subunits. Mg(2+) is required as a cofactor.

The enzyme catalyses succinate + ATP + CoA = succinyl-CoA + ADP + phosphate. The catalysed reaction is GTP + succinate + CoA = succinyl-CoA + GDP + phosphate. The protein operates within carbohydrate metabolism; tricarboxylic acid cycle; succinate from succinyl-CoA (ligase route): step 1/1. Its function is as follows. Succinyl-CoA synthetase functions in the citric acid cycle (TCA), coupling the hydrolysis of succinyl-CoA to the synthesis of either ATP or GTP and thus represents the only step of substrate-level phosphorylation in the TCA. The beta subunit provides nucleotide specificity of the enzyme and binds the substrate succinate, while the binding sites for coenzyme A and phosphate are found in the alpha subunit. The chain is Succinate--CoA ligase [ADP-forming] subunit beta from Paracoccus denitrificans (strain Pd 1222).